A 637-amino-acid chain; its full sequence is 1-deoxy-D-xylulose-5-phosphate synthase (637 aa).

Thiamine diphosphate contacts are provided by residues His76 and 117–119; that span reads GHS. Asp148 provides a ligand contact to Mg(2+). Thiamine diphosphate is bound by residues 149–150, Asn177, Tyr294, and Glu381; that span reads GA. Asn177 is a binding site for Mg(2+).

It belongs to the transketolase family. DXPS subfamily. As to quaternary structure, homodimer. The cofactor is Mg(2+). Requires thiamine diphosphate as cofactor.

The catalysed reaction is D-glyceraldehyde 3-phosphate + pyruvate + H(+) = 1-deoxy-D-xylulose 5-phosphate + CO2. The protein operates within metabolic intermediate biosynthesis; 1-deoxy-D-xylulose 5-phosphate biosynthesis; 1-deoxy-D-xylulose 5-phosphate from D-glyceraldehyde 3-phosphate and pyruvate: step 1/1. Catalyzes the acyloin condensation reaction between C atoms 2 and 3 of pyruvate and glyceraldehyde 3-phosphate to yield 1-deoxy-D-xylulose-5-phosphate (DXP). This Neisseria gonorrhoeae (strain ATCC 700825 / FA 1090) protein is 1-deoxy-D-xylulose-5-phosphate synthase.